The sequence spans 724 residues: Putative methyltransferase NSUN7 (724 aa).

The Nucleophile role is filled by C444. Disordered regions lie at residues 542-574, 595-629, and 698-724; these read KTLKRDKKRKKSKALPSRAPHHGDPLRDHLAVD, ISTSTKMSAPAKTVSQAGTSSQVRKPSKPLSTPLV, and TSSTSRRKEKVKESTTSSHVRHPRPWL. Basic residues predominate over residues 543 to 554; sequence TLKRDKKRKKSK. Over residues 562 to 572 the composition is skewed to basic and acidic residues; sequence HHGDPLRDHLA. Positions 595–618 are enriched in polar residues; the sequence is ISTSTKMSAPAKTVSQAGTSSQVR.

It belongs to the class I-like SAM-binding methyltransferase superfamily. RsmB/NOP family. In terms of tissue distribution, expressed in testis.

In terms of biological role, may have S-adenosyl-L-methionine-dependent methyl-transferase activity. The chain is Putative methyltransferase NSUN7 (Nsun7) from Mus musculus (Mouse).